The primary structure comprises 131 residues: Inactive protein FON2 SPARE1 (131 aa).

The tract at residues 67 to 131 (SPSSLTTTDR…VPTGPNPLHH (65 aa)) is disordered. The segment covering 76–97 (RHHHHHRHHGHHHHRGHDRWNR) has biased composition (basic residues).

Belongs to the CLV3/ESR signal peptide family. In terms of tissue distribution, expressed in all aerial apical meristems, including the floral and inflorescence meristems in the reproductive phase and the shoot apical meristem in the vegetative phase. Also detected in the primordia of lateral organs such as the leaf and the floral organs.

In terms of biological role, non functional suppressor of the fon2 mutation. In Oryza sativa subsp. japonica, the protein has a single amino acid substitution at the putative processing site of the signal peptide while in all the other varieties/species of domesticated and wild rice tested the protein is functional. This is Inactive protein FON2 SPARE1 (FOS1) from Oryza sativa subsp. japonica (Rice).